A 489-amino-acid polypeptide reads, in one-letter code: N-succinylglutamate 5-semialdehyde dehydrogenase (489 aa).

Position 223-228 (Gly223–Gly228) interacts with NAD(+). Residues Glu246 and Cys280 contribute to the active site.

This sequence belongs to the aldehyde dehydrogenase family. AstD subfamily.

It carries out the reaction N-succinyl-L-glutamate 5-semialdehyde + NAD(+) + H2O = N-succinyl-L-glutamate + NADH + 2 H(+). It functions in the pathway amino-acid degradation; L-arginine degradation via AST pathway; L-glutamate and succinate from L-arginine: step 4/5. Functionally, catalyzes the NAD-dependent reduction of succinylglutamate semialdehyde into succinylglutamate. In Acinetobacter baylyi (strain ATCC 33305 / BD413 / ADP1), this protein is N-succinylglutamate 5-semialdehyde dehydrogenase.